Reading from the N-terminus, the 235-residue chain is MSDRMKLKGLLAFCLLFLSSFVLAEVNQKEFSVQNSPHLPSRDTIYFEDGRDYFSYKEPIEQASRTDKKIRIQFFFDYDCRVCSSAQDILELYSQIRTYKVALEQYPIATADNQFSARIFYTLQALSAGELSNVLLFETSEKSRYTELSTSNKIQQWAEEQGLDKQLFIQTENSQSVKEQIQNAIELTEEYGVFTYPYVVIGGKYVLTASTLYNDDYSVAVLDFLVNKIEQEQKQ.

The signal sequence occupies residues 1–24 (MSDRMKLKGLLAFCLLFLSSFVLA).

This is an uncharacterized protein from Haemophilus influenzae (strain ATCC 51907 / DSM 11121 / KW20 / Rd).